A 382-amino-acid polypeptide reads, in one-letter code: Queuine tRNA-ribosyltransferase (382 aa).

The active-site Proton acceptor is the Asp93. Substrate contacts are provided by residues 93–97 (DSGGF), Asp147, Gln191, and Gly218. The interval 249–255 (GVGKPED) is RNA binding. Asp268 functions as the Nucleophile in the catalytic mechanism. The interval 273–277 (TRNAR) is RNA binding; important for wobble base 34 recognition. Residues Cys306, Cys308, Cys311, and His337 each contribute to the Zn(2+) site.

It belongs to the queuine tRNA-ribosyltransferase family. In terms of assembly, homodimer. Within each dimer, one monomer is responsible for RNA recognition and catalysis, while the other monomer binds to the replacement base PreQ1. Requires Zn(2+) as cofactor.

The enzyme catalyses 7-aminomethyl-7-carbaguanine + guanosine(34) in tRNA = 7-aminomethyl-7-carbaguanosine(34) in tRNA + guanine. It participates in tRNA modification; tRNA-queuosine biosynthesis. In terms of biological role, catalyzes the base-exchange of a guanine (G) residue with the queuine precursor 7-aminomethyl-7-deazaguanine (PreQ1) at position 34 (anticodon wobble position) in tRNAs with GU(N) anticodons (tRNA-Asp, -Asn, -His and -Tyr). Catalysis occurs through a double-displacement mechanism. The nucleophile active site attacks the C1' of nucleotide 34 to detach the guanine base from the RNA, forming a covalent enzyme-RNA intermediate. The proton acceptor active site deprotonates the incoming PreQ1, allowing a nucleophilic attack on the C1' of the ribose to form the product. After dissociation, two additional enzymatic reactions on the tRNA convert PreQ1 to queuine (Q), resulting in the hypermodified nucleoside queuosine (7-(((4,5-cis-dihydroxy-2-cyclopenten-1-yl)amino)methyl)-7-deazaguanosine). The protein is Queuine tRNA-ribosyltransferase of Actinobacillus pleuropneumoniae serotype 3 (strain JL03).